Reading from the N-terminus, the 855-residue chain is DNA polymerase (855 aa).

The region spanning 107–332 (KPEMKPVFDA…LHNFFLPKIE (226 aa)) is the 3'-5' exonuclease domain. Residues 333–833 (KNEKLCSLYY…MDKEHPDHSK (501 aa)) are polymerase.

It belongs to the DNA polymerase type-A family. Single-chain monomer with multiple functions.

The catalysed reaction is DNA(n) + a 2'-deoxyribonucleoside 5'-triphosphate = DNA(n+1) + diphosphate. In terms of biological role, replicates the viral genomic DNA. This polymerase possesses two enzymatic activities: DNA synthesis (polymerase) and an exonucleolytic activity that degrades single-stranded DNA in the 3'-5' direction for proofreading purpose. The DNA synthesis very likely occurs by strand displacement. The sequence is that of DNA polymerase from Escherichia phage T5 (Enterobacteria phage T5).